Here is a 266-residue protein sequence, read N- to C-terminus: Vitamin B12-binding protein (266 aa).

An N-terminal signal peptide occupies residues 1 to 22 (MAKSLFRALVALSFLAPLWLNA). Residues 25 to 266 (RVITLSPANT…QLCNALSQVD (242 aa)) form the Fe/B12 periplasmic-binding domain. Residues Y50 and 242 to 246 (DWFER) contribute to the cyanocob(III)alamin site. C183 and C259 are joined by a disulfide.

This sequence belongs to the BtuF family. The complex is composed of two ATP-binding proteins (BtuD), two transmembrane proteins (BtuC) and a solute-binding protein (BtuF).

It is found in the periplasm. In terms of biological role, part of the ABC transporter complex BtuCDF involved in vitamin B12 import. Binds vitamin B12 and delivers it to the periplasmic surface of BtuC. The polypeptide is Vitamin B12-binding protein (Shigella flexneri).